We begin with the raw amino-acid sequence, 209 residues long: Probable glutathione peroxidase 8 (209 aa).

Met1 carries the N-acetylmethionine modification. A helical membrane pass occupies residues 18 to 40; that stretch reads IFAVLLSMVLCTVMLFLLQLKFL. Residue Cys79 is part of the active site.

It belongs to the glutathione peroxidase family.

The protein resides in the membrane. The catalysed reaction is 2 glutathione + H2O2 = glutathione disulfide + 2 H2O. The sequence is that of Probable glutathione peroxidase 8 (Gpx8) from Mus musculus (Mouse).